Consider the following 1074-residue polypeptide: BRD4-interacting chromatin-remodeling complex-associated protein-like (1074 aa).

4 disordered regions span residues 542-603, 620-689, 834-874, and 887-952; these read AVSS…NTPG, TSPI…GQKR, TPLD…HDQF, and GNIS…SKLP. Polar residues-rich tracts occupy residues 544 to 576, 591 to 603, 620 to 629, and 660 to 680; these read SSAS…QANR, ASKS…NTPG, TSPIPTSKTT, and GATQ…TAVQ. The residue at position 621 (Ser-621) is a Phosphoserine. Composition is skewed to basic and acidic residues over residues 889–904, 913–925, and 934–948; these read ISKK…KFDR, PPED…DPAK, and EGHR…HGSE. Ser-976 is modified (phosphoserine).

As to quaternary structure, component of the multiprotein chromatin-remodeling complexes SWI/SNF: SWI/SNF-A (BAF), SWI/SNF-B (PBAF) and related complexes. The canonical complex contains a catalytic subunit (either SMARCA4/BRG1/BAF190A or SMARCA2/BRM/BAF190B) and at least SMARCE1, ACTL6A/BAF53, SMARCC1/BAF155, SMARCC2/BAF170, and SMARCB1/SNF5/BAF47. Other subunits specific to each of the complexes may also be present permitting several possible combinations developmentally and tissue specific. Component of the SWI/SNF (GBAF) subcomplex, which includes at least BICRA or BICRAL (mutually exclusive), BRD9, SS18, the core BAF subunits, SMARCA2/BRM, SMARCA4/BRG1/BAF190A, ACTL6A/BAF53, SMARCC1/BAF155, and SMARCD1/BAF60A.

In terms of biological role, component of SWI/SNF chromatin remodeling subcomplex GBAF that carries out key enzymatic activities, changing chromatin structure by altering DNA-histone contacts within a nucleosome in an ATP-dependent manner. This Mus musculus (Mouse) protein is BRD4-interacting chromatin-remodeling complex-associated protein-like.